Consider the following 635-residue polypeptide: 4-hydroxy-3-methylbut-2-enyl diphosphate reductase (635 aa).

Residues 1 to 279 (MSIILAKKSG…KEAIFKMSNK (279 aa)) form a 4-hydroxy-3-methylbut-2-enyl diphosphate reductase region. Position 12 (Cys12) interacts with [4Fe-4S] cluster. His42 and His77 together coordinate (2E)-4-hydroxy-3-methylbut-2-enyl diphosphate. Dimethylallyl diphosphate contacts are provided by His42 and His77. Isopentenyl diphosphate is bound by residues His42 and His77. Cys99 is a binding site for [4Fe-4S] cluster. His127 contacts (2E)-4-hydroxy-3-methylbut-2-enyl diphosphate. His127 lines the dimethylallyl diphosphate pocket. Residue His127 coordinates isopentenyl diphosphate. Catalysis depends on Glu129, which acts as the Proton donor. Residue Thr163 participates in (2E)-4-hydroxy-3-methylbut-2-enyl diphosphate binding. Position 191 (Cys191) interacts with [4Fe-4S] cluster. Residues Ser219, Ser220, Asn221, and Ser263 each coordinate (2E)-4-hydroxy-3-methylbut-2-enyl diphosphate. Dimethylallyl diphosphate-binding residues include Ser219, Ser220, Asn221, and Ser263. Positions 219, 220, 221, and 263 each coordinate isopentenyl diphosphate. 4 consecutive S1 motif domains span residues 298 to 373 (GQEV…LNRE), 380 to 455 (KEAF…ASRR), 476 to 544 (DTIK…LSIK), and 561 to 630 (GNIV…LSIK).

This sequence in the N-terminal section; belongs to the IspH family. [4Fe-4S] cluster serves as cofactor.

The catalysed reaction is isopentenyl diphosphate + 2 oxidized [2Fe-2S]-[ferredoxin] + H2O = (2E)-4-hydroxy-3-methylbut-2-enyl diphosphate + 2 reduced [2Fe-2S]-[ferredoxin] + 2 H(+). It catalyses the reaction dimethylallyl diphosphate + 2 oxidized [2Fe-2S]-[ferredoxin] + H2O = (2E)-4-hydroxy-3-methylbut-2-enyl diphosphate + 2 reduced [2Fe-2S]-[ferredoxin] + 2 H(+). Its pathway is isoprenoid biosynthesis; dimethylallyl diphosphate biosynthesis; dimethylallyl diphosphate from (2E)-4-hydroxy-3-methylbutenyl diphosphate: step 1/1. The protein operates within isoprenoid biosynthesis; isopentenyl diphosphate biosynthesis via DXP pathway; isopentenyl diphosphate from 1-deoxy-D-xylulose 5-phosphate: step 6/6. Its function is as follows. Catalyzes the conversion of 1-hydroxy-2-methyl-2-(E)-butenyl 4-diphosphate (HMBPP) into a mixture of isopentenyl diphosphate (IPP) and dimethylallyl diphosphate (DMAPP). Acts in the terminal step of the DOXP/MEP pathway for isoprenoid precursor biosynthesis. This is 4-hydroxy-3-methylbut-2-enyl diphosphate reductase from Clostridium tetani (strain Massachusetts / E88).